Consider the following 541-residue polypeptide: uncharacterized protein (541 aa).

The protein resides in the virion. This is an uncharacterized protein from Acanthamoeba polyphaga mimivirus (APMV).